The following is a 561-amino-acid chain: MKELLRDLITKELASCFADGSLSSGVFPSIVIEKPAHAEHGDFATNVAMLLAKAEKKAPRVVAEILVSRLQESADICSKLEVAGPGFINFYVKDEAWRQTLIAIDRACADYGKSRIGEGKKIQVEFVSANPTGPLHIGHGRGAAIGDTICRLLAAIGWDVTREFYYNDAGQQIANLALSVQARCLGIEPDDPRWPLDGYQGDYIRDVARSYLGQETVEADDQHVTAAGDPQDLDAIRRFAVAYLRREQDQDLTAFDVHFDVYSLESALYAEGRVEAVVQRLIDSGHTYEQDGALWLRTTTFGDDKDRVMRKADGGYTYFVPDVAYHLSKWERGFTRVINEQGADHHSTITRVRAGLQALNAGIPVGWPEYVLHQMVTVMRGGEEVKISKRAGSYVTLRDLIDEVGRDATRFFFVMRKPDSQLVFDIDLAKQQTLDNPVYYVQYAHARICSIFENALERGFVLPAAESVPLERLVTLEEMTIIKTLASFPEILEGSALNFEPHRVTYYLQELAGQFHSFYNRNRVITEDAELTAARLFLLKCVALTLKNALTVLGISAPEKM.

Positions 129–139 (ANPTGPLHIGH) match the 'HIGH' region motif.

Belongs to the class-I aminoacyl-tRNA synthetase family. Monomer.

It localises to the cytoplasm. The enzyme catalyses tRNA(Arg) + L-arginine + ATP = L-arginyl-tRNA(Arg) + AMP + diphosphate. The polypeptide is Arginine--tRNA ligase (Geotalea uraniireducens (strain Rf4) (Geobacter uraniireducens)).